The chain runs to 309 residues: Mitogen-activated protein kinase kinase 8 (309 aa).

In terms of domain architecture, Protein kinase spans 53-305 (LDRISVLGSG…ASQLLNHPFL (253 aa)). ATP contacts are provided by residues 59–67 (LGSGNGGTV) and Lys82. Asp167 (proton acceptor) is an active-site residue. Phosphoserine is present on residues Ser195 and Ser201. Phosphothreonine is present on Thr205.

It belongs to the protein kinase superfamily. STE Ser/Thr protein kinase family. MAP kinase kinase subfamily. In terms of processing, phosphorylation at Ser-195 and Ser-201 by MAP kinase kinase kinases positively regulates kinase activity.

The enzyme catalyses L-seryl-[protein] + ATP = O-phospho-L-seryl-[protein] + ADP + H(+). It carries out the reaction L-threonyl-[protein] + ATP = O-phospho-L-threonyl-[protein] + ADP + H(+). The catalysed reaction is L-tyrosyl-[protein] + ATP = O-phospho-L-tyrosyl-[protein] + ADP + H(+). This is Mitogen-activated protein kinase kinase 8 (MKK8) from Arabidopsis thaliana (Mouse-ear cress).